The chain runs to 163 residues: Cyanate hydratase (163 aa).

Active-site residues include Arg-103, Glu-106, and Ser-129.

It belongs to the cyanase family.

The catalysed reaction is cyanate + hydrogencarbonate + 3 H(+) = NH4(+) + 2 CO2. Functionally, catalyzes the reaction of cyanate with bicarbonate to produce ammonia and carbon dioxide. In Paracoccidioides brasiliensis (strain Pb18), this protein is Cyanate hydratase.